A 379-amino-acid chain; its full sequence is Actin, cytoplasmic (379 aa).

This sequence belongs to the actin family.

The protein resides in the cytoplasm. The protein localises to the cytoskeleton. It catalyses the reaction ATP + H2O = ADP + phosphate + H(+). In terms of biological role, actins are highly conserved proteins that are involved in various types of cell motility and are ubiquitously expressed in all eukaryotic cells. This chain is Actin, cytoplasmic, found in Euplotes crassus.